A 325-amino-acid chain; its full sequence is Aldo-keto reductase family 1 member A1 (325 aa).

Ala2 is modified (N-acetylalanine). Ser4 bears the Phosphoserine mark. NADP(+)-binding positions include 11-20, Thr21, and Trp22; that span reads GQKMPLIGLG. Ser38 is modified (phosphoserine). Position 45 (Asp45) interacts with NADP(+). Tyr50 (proton donor) is an active-site residue. An N6-acetyllysine; alternate modification is found at Lys127. Lys127 is modified (N6-succinyllysine; alternate). Residues Ser162, Asn163, Ser211, Leu213, Ser215, Ser216, Lys263, Ser264, Val265, Thr266, Arg269, and Asn273 each coordinate NADP(+). Residue Ser211 is modified to Phosphoserine.

This sequence belongs to the aldo/keto reductase family. Monomer.

It is found in the cytoplasm. The protein localises to the cytosol. The protein resides in the apical cell membrane. It catalyses the reaction a primary alcohol + NADP(+) = an aldehyde + NADPH + H(+). The enzyme catalyses L-gulonate + NADP(+) = aldehydo-D-glucuronate + NADPH + H(+). It carries out the reaction L-gulono-1,4-lactone + NADP(+) = D-glucurono-3,6-lactone + NADPH + H(+). The catalysed reaction is allyl alcohol + NADP(+) = acrolein + NADPH + H(+). It catalyses the reaction glycerol + NADP(+) = D-glyceraldehyde + NADPH + H(+). The enzyme catalyses glycerol + NADP(+) = L-glyceraldehyde + NADPH + H(+). It carries out the reaction hydroxyacetone + NADP(+) = methylglyoxal + NADPH + H(+). The catalysed reaction is 3-deoxyfructose + NADP(+) = 3-deoxyglucosone + NADPH + H(+). It catalyses the reaction (R)-mevalonate + NADP(+) = (R)-mevaldate + NADPH + H(+). The enzyme catalyses pyridine 3-methanol + NADP(+) = pyridine-3-carbaldehyde + NADPH + H(+). It carries out the reaction S-nitroso-CoA + NADPH + H(+) = sulfinamide-CoA + NADP(+). The catalysed reaction is S-nitrosoglutathione + NADPH + H(+) = S-(hydroxysulfenamide)glutathione + NADP(+). In terms of biological role, catalyzes the NADPH-dependent reduction of a wide variety of carbonyl-containing compounds to their corresponding alcohols. Displays enzymatic activity towards endogenous metabolites such as aromatic and aliphatic aldehydes, ketones, monosaccharides and bile acids, with a preference for negatively charged substrates, such as glucuronate and succinic semialdehyde. Plays an important role in ascorbic acid biosynthesis by catalyzing the reduction of D-glucuronic acid and D-glucurono-gamma-lactone. Functions as a detoxifiying enzyme by reducing a range of toxic aldehydes. Reduces methylglyoxal and 3-deoxyglucosone, which are present at elevated levels under hyperglycemic conditions and are cytotoxic. Involved also in the detoxification of lipid-derived aldehydes like acrolein. Plays a role in the activation of procarcinogens, such as polycyclic aromatic hydrocarbon trans-dihydrodiols, and in the metabolism of various xenobiotics and drugs. Also acts as an inhibitor of protein S-nitrosylation by mediating degradation of S-nitroso-coenzyme A (S-nitroso-CoA), a cofactor required to S-nitrosylate proteins. S-nitroso-CoA reductase activity is involved in reprogramming intermediary metabolism in renal proximal tubules, notably by inhibiting protein S-nitrosylation of isoform 2 of PKM (PKM2). Also acts as a S-nitroso-glutathione reductase by catalyzing the NADPH-dependent reduction of S-nitrosoglutathione. Displays no reductase activity towards retinoids. This is Aldo-keto reductase family 1 member A1 from Bos taurus (Bovine).